A 136-amino-acid polypeptide reads, in one-letter code: Transmembrane protein 203 (136 aa).

Helical transmembrane passes span 14 to 34, 50 to 72, 81 to 101, and 112 to 132; these read FAQL…VLLA, FIPF…VRLF, VLRL…EMLL, and LWYG…MIRA.

It is found in the endoplasmic reticulum membrane. Its subcellular location is the endoplasmic reticulum-Golgi intermediate compartment. Its function is as follows. Involved in the regulation of cellular calcium homeotasis. May act as a regulator of STING-mediated inflammatory signaling in macrophages. The sequence is that of Transmembrane protein 203 (tmem203) from Xenopus laevis (African clawed frog).